The primary structure comprises 381 residues: Cobalt-precorrin-5B C(1)-methyltransferase (381 aa).

Belongs to the CbiD family.

It carries out the reaction Co-precorrin-5B + S-adenosyl-L-methionine = Co-precorrin-6A + S-adenosyl-L-homocysteine. It functions in the pathway cofactor biosynthesis; adenosylcobalamin biosynthesis; cob(II)yrinate a,c-diamide from sirohydrochlorin (anaerobic route): step 6/10. Catalyzes the methylation of C-1 in cobalt-precorrin-5B to form cobalt-precorrin-6A. The sequence is that of Cobalt-precorrin-5B C(1)-methyltransferase from Clostridium botulinum (strain Alaska E43 / Type E3).